The following is a 304-amino-acid chain: D-alanine--D-alanine ligase (304 aa).

The 197-residue stretch at 103–299 folds into the ATP-grasp domain; the sequence is KLIWQALGLP…FADLCIEILK (197 aa). 129–184 serves as a coordination point for ATP; that stretch reads EEKLGLPMFVKPAAEGSSVGVVKVKGKGRLKSVYEELKHLQGEIIAERFIGGGEYS. 3 residues coordinate Mg(2+): Asp253, Glu266, and Asn268.

It belongs to the D-alanine--D-alanine ligase family. The cofactor is Mg(2+). It depends on Mn(2+) as a cofactor.

Its subcellular location is the cytoplasm. It catalyses the reaction 2 D-alanine + ATP = D-alanyl-D-alanine + ADP + phosphate + H(+). It functions in the pathway cell wall biogenesis; peptidoglycan biosynthesis. In terms of biological role, cell wall formation. The chain is D-alanine--D-alanine ligase from Neisseria meningitidis serogroup C / serotype 2a (strain ATCC 700532 / DSM 15464 / FAM18).